We begin with the raw amino-acid sequence, 145 residues long: Monooxygenase AacuP (145 aa).

Belongs to the avfA family.

Its pathway is secondary metabolite biosynthesis. Monooxygenase; part of the gene cluster that mediates the biosynthesis of the tetrahydroxanthone dimer secalonic acid D. The pathway begins with the synthesis of atrochrysone thioester by the polyketide synthase AacuL. The atrochrysone carboxyl ACP thioesterase AacuM then breaks the thioester bond and releases the atrochrysone carboxylic acid from AacuL. Atrochrysone carboxylic acid is decarboxylated by the decarboxylase AacuI, and oxidized by the anthrone oxygenase AacuG to yield emodin. Emodin is then reduced to emodin hydroquinone by a yet unidentified oxidoreductase. A-ring reduction by the short chain dehydrogenase AacuN, dehydration by the scytalone dehydratase-like protein AacuK and probable spontaneous re-oxidation, results in overall deoxygenation to chrysophanol. Baeyer-Villiger oxidation by the Baeyer-Villiger monooxygenase (BVMO) AacuH then yields monodictyphenone. Monodictyphenone is transformed into compounds with the tetrahydroxanthone skeleton via methylesterification by the methyltransferase AacuQ, followed by the action of the flavin-dependent monooxygenase AacuC, the isomerase AacuP, and the short chain dehydrogenase/reductase AacuF or AacuD. AacuF and AacuD should accept the same compound as a substrate but perform the ketoreduction with a different stereoselectivity, thus yielding blennolides B and A, respectively. In the final step of the biosynthesis, the cytochrome P450 monooxygenase AacuE accepts blennolide B and/or blennolide A to conduct the dimerization reaction to furnish the tetrahydroxanthone dimers, secalonic acids D, B, and F. The protein is Monooxygenase AacuP of Aspergillus aculeatus (strain ATCC 16872 / CBS 172.66 / WB 5094).